The primary structure comprises 182 residues: UPF0254 protein MK0012 (182 aa).

It belongs to the UPF0254 family.

The sequence is that of UPF0254 protein MK0012 from Methanopyrus kandleri (strain AV19 / DSM 6324 / JCM 9639 / NBRC 100938).